The chain runs to 418 residues: D-amino acid dehydrogenase (418 aa).

3 to 17 (VLILGSGVVGVATAY) provides a ligand contact to FAD.

Belongs to the DadA oxidoreductase family. Requires FAD as cofactor.

The enzyme catalyses a D-alpha-amino acid + A + H2O = a 2-oxocarboxylate + AH2 + NH4(+). It functions in the pathway amino-acid degradation; D-alanine degradation; NH(3) and pyruvate from D-alanine: step 1/1. Functionally, oxidative deamination of D-amino acids. The sequence is that of D-amino acid dehydrogenase from Granulibacter bethesdensis (strain ATCC BAA-1260 / CGDNIH1).